The following is a 587-amino-acid chain: 5-aminolevulinate synthase, erythroid-specific, mitochondrial (587 aa).

Residues M1 to S49 constitute a mitochondrion transit peptide. R163 serves as a coordination point for succinyl-CoA. Pyridoxal 5'-phosphate contacts are provided by C258 and F259. Residues S280 and K299 each coordinate succinyl-CoA. Pyridoxal 5'-phosphate-binding residues include S332, H360, and T388. Residue K391 is part of the active site. Residue K391 is modified to N6-(pyridoxal phosphate)lysine. Pyridoxal 5'-phosphate contacts are provided by T420 and T421. T508 serves as a coordination point for succinyl-CoA.

Belongs to the class-II pyridoxal-phosphate-dependent aminotransferase family. In terms of assembly, homodimer. Interacts with SUCLA2. It depends on pyridoxal 5'-phosphate as a cofactor. In terms of tissue distribution, erythroid-specific.

The protein localises to the mitochondrion inner membrane. The catalysed reaction is succinyl-CoA + glycine + H(+) = 5-aminolevulinate + CO2 + CoA. It functions in the pathway porphyrin-containing compound metabolism; protoporphyrin-IX biosynthesis; 5-aminolevulinate from glycine: step 1/1. Functionally, catalyzes the pyridoxal 5'-phosphate (PLP)-dependent condensation of succinyl-CoA and glycine to form aminolevulinic acid (ALA), with CoA and CO2 as by-products. Contributes significantly to heme formation during erythropoiesis. This chain is 5-aminolevulinate synthase, erythroid-specific, mitochondrial (Alas2), found in Rattus norvegicus (Rat).